A 386-amino-acid polypeptide reads, in one-letter code: S-(hydroxymethyl)glutathione dehydrogenase (386 aa).

Residue serine 2 is modified to N-acetylserine. Cysteine 49 serves as a coordination point for Zn(2+). Histidine 50 is a binding site for NAD(+). Histidine 71, glutamate 72, cysteine 101, cysteine 104, cysteine 107, cysteine 115, and cysteine 179 together coordinate Zn(2+). NAD(+) contacts are provided by residues 204-209, aspartate 228, 300-302, and 325-327; these read GCGTVG, IGV, and SAF.

Belongs to the zinc-containing alcohol dehydrogenase family. Class-III subfamily. Requires Zn(2+) as cofactor.

It is found in the cytoplasm. The protein localises to the mitochondrion. The catalysed reaction is a primary alcohol + NAD(+) = an aldehyde + NADH + H(+). It catalyses the reaction a secondary alcohol + NAD(+) = a ketone + NADH + H(+). The enzyme catalyses S-(hydroxymethyl)glutathione + NADP(+) = S-formylglutathione + NADPH + H(+). It carries out the reaction S-(hydroxymethyl)glutathione + NAD(+) = S-formylglutathione + NADH + H(+). The catalysed reaction is S-nitrosoglutathione + NADH + H(+) = S-(hydroxysulfenamide)glutathione + NAD(+). Oxidizes long-chain alcohols and, in the presence of glutathione, is able to oxidize formaldehyde. Is responsible for yeast resistance to formaldehyde. Also acts as a S-nitroso-glutathione reductase by catalyzing the NADH-dependent reduction of S-nitrosoglutathione, thereby regulating protein S-nitrosylation. This chain is S-(hydroxymethyl)glutathione dehydrogenase (SFA1), found in Saccharomyces cerevisiae (strain ATCC 204508 / S288c) (Baker's yeast).